A 75-amino-acid chain; its full sequence is Putative defensin-like protein 271 (75 aa).

The N-terminal stretch at 1 to 23 (MTSMKLHIVALCIIVSFLVNVQS) is a signal peptide. 4 cysteine pairs are disulfide-bonded: cysteine 33-cysteine 72, cysteine 39-cysteine 61, cysteine 45-cysteine 70, and cysteine 49-cysteine 71.

Belongs to the DEFL family.

It is found in the secreted. The protein is Putative defensin-like protein 271 of Arabidopsis thaliana (Mouse-ear cress).